The primary structure comprises 607 residues: 1-deoxy-D-xylulose-5-phosphate synthase (607 aa).

Thiamine diphosphate contacts are provided by residues H63 and 104 to 106 (GHS). D135 contributes to the Mg(2+) binding site. Thiamine diphosphate is bound by residues 136–137 (GA), N164, Y271, and E351. N164 is a binding site for Mg(2+).

This sequence belongs to the transketolase family. DXPS subfamily. As to quaternary structure, homodimer. Mg(2+) is required as a cofactor. The cofactor is thiamine diphosphate.

It carries out the reaction D-glyceraldehyde 3-phosphate + pyruvate + H(+) = 1-deoxy-D-xylulose 5-phosphate + CO2. It participates in metabolic intermediate biosynthesis; 1-deoxy-D-xylulose 5-phosphate biosynthesis; 1-deoxy-D-xylulose 5-phosphate from D-glyceraldehyde 3-phosphate and pyruvate: step 1/1. Catalyzes the acyloin condensation reaction between C atoms 2 and 3 of pyruvate and glyceraldehyde 3-phosphate to yield 1-deoxy-D-xylulose-5-phosphate (DXP). The sequence is that of 1-deoxy-D-xylulose-5-phosphate synthase from Campylobacter hominis (strain ATCC BAA-381 / DSM 21671 / CCUG 45161 / LMG 19568 / NCTC 13146 / CH001A).